The sequence spans 103 residues: Phosphoribosyl-ATP pyrophosphatase (103 aa).

The protein belongs to the PRA-PH family.

It is found in the cytoplasm. The catalysed reaction is 1-(5-phospho-beta-D-ribosyl)-ATP + H2O = 1-(5-phospho-beta-D-ribosyl)-5'-AMP + diphosphate + H(+). The protein operates within amino-acid biosynthesis; L-histidine biosynthesis; L-histidine from 5-phospho-alpha-D-ribose 1-diphosphate: step 2/9. The polypeptide is Phosphoribosyl-ATP pyrophosphatase (Cereibacter sphaeroides (strain ATCC 17025 / ATH 2.4.3) (Rhodobacter sphaeroides)).